The primary structure comprises 435 residues: Serine--tRNA ligase (435 aa).

242 to 244 (TAE) is a binding site for L-serine. Residue 273–275 (RSE) coordinates ATP. Glutamate 296 serves as a coordination point for L-serine. 360–363 (EISS) is an ATP binding site. Serine 396 serves as a coordination point for L-serine.

Belongs to the class-II aminoacyl-tRNA synthetase family. Type-1 seryl-tRNA synthetase subfamily. In terms of assembly, homodimer. The tRNA molecule binds across the dimer.

It is found in the cytoplasm. The catalysed reaction is tRNA(Ser) + L-serine + ATP = L-seryl-tRNA(Ser) + AMP + diphosphate + H(+). The enzyme catalyses tRNA(Sec) + L-serine + ATP = L-seryl-tRNA(Sec) + AMP + diphosphate + H(+). It functions in the pathway aminoacyl-tRNA biosynthesis; selenocysteinyl-tRNA(Sec) biosynthesis; L-seryl-tRNA(Sec) from L-serine and tRNA(Sec): step 1/1. In terms of biological role, catalyzes the attachment of serine to tRNA(Ser). Is also able to aminoacylate tRNA(Sec) with serine, to form the misacylated tRNA L-seryl-tRNA(Sec), which will be further converted into selenocysteinyl-tRNA(Sec). The chain is Serine--tRNA ligase from Vibrio cholerae serotype O1 (strain ATCC 39541 / Classical Ogawa 395 / O395).